The primary structure comprises 452 residues: Nebulette (452 aa).

The interval 1–26 (MKVPVSGDVKEETEEENVEQEENQEA) is disordered. Positions 11 to 23 (EETEEENVEQEEN) are enriched in acidic residues. Nebulin repeat units follow at residues 29-63 (SLKP…KSKD), 64-98 (KCTF…ADLS), 101-135 (LYKD…AEKG), 138-172 (DYTH…GTHT), 173-199 (YTAE…EYKK), 206-240 (KEPS…NEMK), 263-278 (LASD…ENKG), 279-313 (LYHF…KNKG), 315-349 (SMLE…KEIK), 352-386 (SSLD…NEIK), 389-423 (GMEL…TEIK), and 426-452 (GMQV…VRMV).

As to quaternary structure, interacts (via nebulin repeats 1-5) with DESM (via rod region). Interacts (via SH3 domain) with XIRP2.

It is found in the cytoplasm. In terms of biological role, binds to actin and plays an important role in the assembly of the Z-disk. May functionally link sarcomeric actin to the desmin intermediate filaments in the heart muscle sarcomeres. Isoform 2 might play a role in the assembly of focal adhesion. The sequence is that of Nebulette (Nebl) from Mus musculus (Mouse).